Here is a 350-residue protein sequence, read N- to C-terminus: Ion-translocating oxidoreductase complex subunit D (350 aa).

4 helical membrane passes run F36–L56, P68–S88, I89–V109, and I120–T140. An FMN phosphoryl threonine modification is found at T185. 5 helical membrane passes run G212–L232, W239–L259, I265–T285, A291–I311, and G315–I335.

Belongs to the NqrB/RnfD family. The complex is composed of six subunits: RnfA, RnfB, RnfC, RnfD, RnfE and RnfG. It depends on FMN as a cofactor.

The protein localises to the cell inner membrane. Part of a membrane-bound complex that couples electron transfer with translocation of ions across the membrane. The chain is Ion-translocating oxidoreductase complex subunit D from Shewanella piezotolerans (strain WP3 / JCM 13877).